Consider the following 402-residue polypeptide: Subtilisin-like protease 9 (402 aa).

An N-terminal signal peptide occupies residues 1–20 (MGFFRQLFSLSLCALSLAIP). Positions 21–120 (SKLIGLENTQ…VEVDRVVKLD (100 aa)) are excised as a propeptide. The 84-residue stretch at 36–119 (SYIVVMKSTI…YVEVDRVVKL (84 aa)) folds into the Inhibitor I9 domain. One can recognise a Peptidase S8 domain in the interval 130–402 (SWGLGRISHK…RKLLYNGSGA (273 aa)). Residues Asp162 and His193 each act as charge relay system in the active site. An N-linked (GlcNAc...) asparagine glycan is attached at Asn254. Ser348 (charge relay system) is an active-site residue. Residues Asn390 and Asn398 are each glycosylated (N-linked (GlcNAc...) asparagine).

The protein belongs to the peptidase S8 family.

The protein resides in the secreted. Secreted subtilisin-like serine protease with keratinolytic activity that contributes to pathogenicity. The chain is Subtilisin-like protease 9 (SUB9) from Arthroderma benhamiae (strain ATCC MYA-4681 / CBS 112371) (Trichophyton mentagrophytes).